The primary structure comprises 43 residues: Photosystem II reaction center protein Psb30 (43 aa).

A helical transmembrane segment spans residues 15–35; the sequence is VIFQLTFVSLILISGPVVIFL.

The protein belongs to the Psb30/Ycf12 family. PSII is composed of 1 copy each of membrane proteins PsbA, PsbB, PsbC, PsbD, PsbE, PsbF, PsbH, PsbI, PsbJ, PsbK, PsbL, PsbM, PsbT, PsbX, PsbY, PsbZ, Psb30/Ycf12, peripheral proteins PsbO, CyanoQ (PsbQ), PsbU, PsbV and a large number of cofactors. It forms dimeric complexes.

The protein localises to the cellular thylakoid membrane. Its function is as follows. A core subunit of photosystem II (PSII), probably helps stabilize the reaction center. This chain is Photosystem II reaction center protein Psb30, found in Picosynechococcus sp. (strain ATCC 27264 / PCC 7002 / PR-6) (Agmenellum quadruplicatum).